We begin with the raw amino-acid sequence, 235 residues long: Matrix protein (235 aa).

It belongs to the nucleorhabdovirus type-2 matrix protein family. Homomultimer. Interacts with nucleoprotein and with the cytoplasmic domain of glycoprotein.

The protein localises to the virion membrane. It localises to the host endomembrane system. Functionally, plays a major role in assembly and budding of virion. Completely covers the ribonucleoprotein coil and keep it in condensed bullet-shaped form. Inhibits viral transcription and stimulates replication. The polypeptide is Matrix protein (M) (Rottboellia (Sorghum)).